We begin with the raw amino-acid sequence, 34 residues long: Small, acid-soluble spore protein M (34 aa).

Positions 1–10 (MKTRPKKAGQ) are enriched in basic residues. Positions 1-34 (MKTRPKKAGQQKKTESKAIDSLDKKLGGPNRPST) are disordered. A compositionally biased stretch (basic and acidic residues) spans 12–26 (KKTESKAIDSLDKKL).

The protein localises to the spore core. This is Small, acid-soluble spore protein M (sspM) from Bacillus subtilis (strain 168).